A 483-amino-acid polypeptide reads, in one-letter code: 6-phosphogluconate dehydrogenase, decarboxylating 1 (483 aa).

NADP(+) is bound by residues 11–16 (GLAVMG), 34–36 (NRT), 78–80 (VKA), and N106. Substrate is bound by residues N106 and 132-134 (SGG). K186 functions as the Proton acceptor in the catalytic mechanism. 189-190 (HN) contacts substrate. Residue E193 is the Proton donor of the active site. The substrate site is built by Y194, K264, R291, R454, and H460.

Belongs to the 6-phosphogluconate dehydrogenase family. Homodimer.

The protein localises to the cytoplasm. The catalysed reaction is 6-phospho-D-gluconate + NADP(+) = D-ribulose 5-phosphate + CO2 + NADPH. It functions in the pathway carbohydrate degradation; pentose phosphate pathway; D-ribulose 5-phosphate from D-glucose 6-phosphate (oxidative stage): step 3/3. Its function is as follows. Catalyzes the oxidative decarboxylation of 6-phosphogluconate to ribulose 5-phosphate and CO(2), with concomitant reduction of NADP to NADPH. In Spinacia oleracea (Spinach), this protein is 6-phosphogluconate dehydrogenase, decarboxylating 1 (pgdC).